The sequence spans 366 residues: Purple acid phosphatase 3 (366 aa).

Positions 1–32 are cleaved as a signal peptide; sequence MTYIYRDTKITTKSTIPFLIFFLFCFSNLSMA. D81 serves as a coordination point for Fe cation. N-linked (GlcNAc...) asparagine glycosylation is present at N89. Fe cation is bound by residues D114 and Y117. A Zn(2+)-binding site is contributed by D114. The Zn(2+) site is built by N152 and H246. Catalysis depends on H255, which acts as the Proton donor. H281 is a Zn(2+) binding site. 281 to 283 serves as a coordination point for substrate; the sequence is HDH. Residue H283 participates in Fe cation binding.

The protein belongs to the metallophosphoesterase superfamily. Purple acid phosphatase family. Homodimer. Fe cation is required as a cofactor. It depends on Zn(2+) as a cofactor. As to expression, expressed in stems, leaves, flowers and siliques.

It is found in the secreted. It carries out the reaction a phosphate monoester + H2O = an alcohol + phosphate. The sequence is that of Purple acid phosphatase 3 (PAP3) from Arabidopsis thaliana (Mouse-ear cress).